Here is a 249-residue protein sequence, read N- to C-terminus: tRNA (guanine-N(1)-)-methyltransferase (249 aa).

S-adenosyl-L-methionine-binding positions include Gly113 and 133 to 138 (IGDFVV).

It belongs to the RNA methyltransferase TrmD family. In terms of assembly, homodimer.

The protein localises to the cytoplasm. The catalysed reaction is guanosine(37) in tRNA + S-adenosyl-L-methionine = N(1)-methylguanosine(37) in tRNA + S-adenosyl-L-homocysteine + H(+). In terms of biological role, specifically methylates guanosine-37 in various tRNAs. This Neisseria meningitidis serogroup C (strain 053442) protein is tRNA (guanine-N(1)-)-methyltransferase.